A 500-amino-acid chain; its full sequence is Serine carboxypeptidase 3 (500 aa).

The first 21 residues, 1-21 (MATTPRLASLLLLLALCAAAA), serve as a signal peptide directing secretion. A propeptide spanning residues 22–73 (GALRLPPDASFPGAQAERLIRALNLLPGRPRRGLGAGAEDVAPGQLLERRVT) is cleaved from the precursor. Disulfide bonds link cysteine 126/cysteine 366, cysteine 294/cysteine 309, and cysteine 332/cysteine 337. Asparagine 144 is a glycosylation site (N-linked (GlcNAc...) asparagine). The active site involves serine 216. Aspartate 404 is a catalytic residue. Cysteine 407 is a substrate binding site. Residue histidine 461 is part of the active site. Residues 485-500 (ESVPEEEPATTFYAAI) constitute a propeptide that is removed on maturation.

The protein belongs to the peptidase S10 family. Monomer.

The enzyme catalyses Release of a C-terminal amino acid with broad specificity.. The chain is Serine carboxypeptidase 3 (CBP3) from Triticum aestivum (Wheat).